A 413-amino-acid chain; its full sequence is uncharacterized protein (413 aa).

A signal peptide spans Met1–Gly20.

This is an uncharacterized protein from Archaeoglobus fulgidus (strain ATCC 49558 / DSM 4304 / JCM 9628 / NBRC 100126 / VC-16).